The sequence spans 293 residues: 33 kDa chaperonin (293 aa).

2 disulfide bridges follow: Cys235–Cys237 and Cys267–Cys270.

Belongs to the HSP33 family. In terms of processing, under oxidizing conditions two disulfide bonds are formed involving the reactive cysteines. Under reducing conditions zinc is bound to the reactive cysteines and the protein is inactive.

The protein localises to the cytoplasm. Redox regulated molecular chaperone. Protects both thermally unfolding and oxidatively damaged proteins from irreversible aggregation. Plays an important role in the bacterial defense system toward oxidative stress. In Deinococcus radiodurans (strain ATCC 13939 / DSM 20539 / JCM 16871 / CCUG 27074 / LMG 4051 / NBRC 15346 / NCIMB 9279 / VKM B-1422 / R1), this protein is 33 kDa chaperonin.